A 147-amino-acid chain; its full sequence is Myoglobin (147 aa).

Residues 2–141 (ADFDMVLKCW…IITDMEADYK (140 aa)) enclose the Globin domain. His-60 contributes to the nitrite binding site. His-60 contacts O2. His-89 is a heme b binding site.

The protein belongs to the globin family. In terms of assembly, monomeric.

The protein localises to the cytoplasm. Its subcellular location is the sarcoplasm. It catalyses the reaction Fe(III)-heme b-[protein] + nitric oxide + H2O = Fe(II)-heme b-[protein] + nitrite + 2 H(+). The enzyme catalyses H2O2 + AH2 = A + 2 H2O. Functionally, monomeric heme protein which primary function is to store oxygen and facilitate its diffusion within muscle tissues. Reversibly binds oxygen through a pentacoordinated heme iron and enables its timely and efficient release as needed during periods of heightened demand. Depending on the oxidative conditions of tissues and cells, and in addition to its ability to bind oxygen, it also has a nitrite reductase activity whereby it regulates the production of bioactive nitric oxide. Under stress conditions, like hypoxia and anoxia, it also protects cells against reactive oxygen species thanks to its pseudoperoxidase activity. The polypeptide is Myoglobin (mb) (Channichthys rhinoceratus (Unicorn icefish)).